Reading from the N-terminus, the 75-residue chain is Translational regulator CsrA (75 aa).

The protein belongs to the CsrA/RsmA family. In terms of assembly, homodimer; the beta-strands of each monomer intercalate to form a hydrophobic core, while the alpha-helices form wings that extend away from the core.

It is found in the cytoplasm. A translational regulator that binds mRNA to regulate translation initiation and/or mRNA stability. Usually binds in the 5'-UTR at or near the Shine-Dalgarno sequence preventing ribosome-binding, thus repressing translation. Its main target seems to be the major flagellin gene, while its function is anatagonized by FliW. The sequence is that of Translational regulator CsrA from Thermosipho melanesiensis (strain DSM 12029 / CIP 104789 / BI429).